The following is a 237-amino-acid chain: Uridylate kinase (237 aa).

12–15 contributes to the ATP binding site; sequence KLSG. The segment at 20 to 25 is involved in allosteric activation by GTP; the sequence is GEDGLG. G54 provides a ligand contact to UMP. The ATP site is built by G55 and R59. UMP is bound by residues D74 and 135–142; that span reads TGNPFFTT. ATP-binding residues include T162, Y168, and D171.

Belongs to the UMP kinase family. In terms of assembly, homohexamer.

It localises to the cytoplasm. It carries out the reaction UMP + ATP = UDP + ADP. It participates in pyrimidine metabolism; CTP biosynthesis via de novo pathway; UDP from UMP (UMPK route): step 1/1. With respect to regulation, allosterically activated by GTP. Inhibited by UTP. Functionally, catalyzes the reversible phosphorylation of UMP to UDP. This is Uridylate kinase from Haemophilus influenzae (strain PittEE).